We begin with the raw amino-acid sequence, 262 residues long: DNA repair protein RecO (262 aa).

Belongs to the RecO family.

Involved in DNA repair and RecF pathway recombination. The chain is DNA repair protein RecO from Enterococcus faecalis (strain ATCC 700802 / V583).